We begin with the raw amino-acid sequence, 703 residues long: Elongation factor G (703 aa).

Positions 7–287 (KFTRNIGIAA…AVMRYLPSPA (281 aa)) constitute a tr-type G domain. Residues 16–23 (AHIDAGKT), 84–88 (DTPGH), and 138–141 (NKMD) contribute to the GTP site.

The protein belongs to the TRAFAC class translation factor GTPase superfamily. Classic translation factor GTPase family. EF-G/EF-2 subfamily.

Its subcellular location is the cytoplasm. Catalyzes the GTP-dependent ribosomal translocation step during translation elongation. During this step, the ribosome changes from the pre-translocational (PRE) to the post-translocational (POST) state as the newly formed A-site-bound peptidyl-tRNA and P-site-bound deacylated tRNA move to the P and E sites, respectively. Catalyzes the coordinated movement of the two tRNA molecules, the mRNA and conformational changes in the ribosome. The polypeptide is Elongation factor G (Christiangramia forsetii (strain DSM 17595 / CGMCC 1.15422 / KT0803) (Gramella forsetii)).